Consider the following 664-residue polypeptide: CRISPR-associated DNA-binding protein Cas12m (664 aa).

The tract at residues 1 to 137 is recognition domain (REC1-N); sequence MKRVTITIDG…AKYRELIGSD (137 aa). The recognition domain (REC2) stretch occupies residues 138 to 212; sequence EETAQMDTEI…AAKDRIRAAG (75 aa). The recognition domain (REC1-C) stretch occupies residues 213-270; it reads NDIENLEKDRQAAVIKAYNNSGLWWGNYNAVLESYKKARIKALKDGAELKYHRFDGSG. Residues 271 to 390 are wedge domain (WED); the sequence is RFTNQIQGGM…VWSVVFTFTT (120 aa). Residues 391-404 form a linker region; that stretch reads DCPTYDQRSSTGNR. The ruvC-I stretch occupies residues 405-618; the sequence is CGLNLGWKKQ…KNGTQIEQVS (214 aa). The tract at residues 618–650 is target nucleic-acid binding (TNB); the sequence is STASSATCSACKGKMEQVDGIMWRCRECRALVD. Residues Cys625, Cys628, Cys642, and Cys645 each coordinate Zn(2+). The tract at residues 651–664 is ruvC-II; sequence QDINAAANLFREVL. A Mg(2+)-binding site is contributed by Asp652.

The protein belongs to the CRISPR-associated DNA-binding protein Cas12m family. Requires Mg(2+) as cofactor. The cofactor is Zn(2+).

Its function is as follows. CRISPR (clustered regularly interspaced short palindromic repeat), is an adaptive immune system that provides protection against mobile genetic elements (viruses, transposable elements and conjugative plasmids). CRISPR clusters contain sequences complementary to antecedent mobile elements and target invading nucleic acids. CRISPR clusters are transcribed and processed into CRISPR RNA (crRNA). Recognizes a short motif in the CRISPR repeat sequences (the 5' PAM or protospacer adjacent motif, 5'-CCN-3' in this organism) to help distinguish self versus nonself, as targets within the bacterial CRISPR locus do not have PAMs. Cas12m-crRNA binds DNA in a PAM-dependent, crRNA-guided fashion. DNA-binding probably inhibits transcription, leading to gene silencing. Upon expression in E.coli as a CRISPR region preferentially binds to its associated crRNA. Probably required for pre-crRNA processing to mature crRNA. The chain is CRISPR-associated DNA-binding protein Cas12m from Pelobacter propionicus (strain DSM 2379 / NBRC 103807 / OttBd1).